Reading from the N-terminus, the 145-residue chain is 3-hydroxyacyl-[acyl-carrier-protein] dehydratase FabZ (145 aa).

Histidine 48 is an active-site residue.

Belongs to the thioester dehydratase family. FabZ subfamily.

The protein resides in the cytoplasm. It catalyses the reaction a (3R)-hydroxyacyl-[ACP] = a (2E)-enoyl-[ACP] + H2O. Functionally, involved in unsaturated fatty acids biosynthesis. Catalyzes the dehydration of short chain beta-hydroxyacyl-ACPs and long chain saturated and unsaturated beta-hydroxyacyl-ACPs. The protein is 3-hydroxyacyl-[acyl-carrier-protein] dehydratase FabZ of Geobacillus thermodenitrificans (strain NG80-2).